Here is a 532-residue protein sequence, read N- to C-terminus: MAKRVAIVGAGVSGLASIKCCLEEGLEPTCFERSDDLGGLWRFTEHVEEGRASLYKSVVSNSCKEMSCYSDFPFPEDYPNYVPNSQFLEYLKMYANHFDLLKHIQFKTKVCSVTKCSDSAVSGQWEVVTMHEEKQESAIFDAVMVCTGFLTNPYLPLDSFPGINAFKGQYFHSRQYKHPDIFKDKRVLVIGMGNSGTDIAVEASHLAEKVFLSTTGGGWVISRIFDSGYPWDMVFMTRFQNMLRNSLPTPIVTWLMERKINNWLNHANYGLIPEDRTQLKEFVLNDELPGRIITGKVFIRPSIKEVKENSVIFNNTSKEEPIDIIVFATGYTFAFPFLDESVVKVEDGQASLYKYIFPAHLQKPTLAIIGLIKPLGSMIPTGETQARWAVRVLKGVNKLPPPSVMIEEINARKENKPSWFGLCYCKALQSDYITYIDELLTYINAKPNLFSMLLTDPHLALTVFFGPCSPYQFRLTGPGKWEGARNAIMTQWDRTFKVIKARVVQESPSPFESFLKVFSFLALLVAIFLIFL.

Ala-2 carries the N-acetylalanine modification. At 2–510 the chain is on the lumenal side; the sequence is AKRVAIVGAG…ARVVQESPSP (509 aa). FAD contacts are provided by residues 9–13, Glu-32, 40–41, and 61–62; these read GAGVS, LW, and NS. Residues 60 to 61 and 195 to 198 contribute to the NADP(+) site; these read SN and SGTD. A helical membrane pass occupies residues 511–531; the sequence is FESFLKVFSFLALLVAIFLIF. Residue Leu-532 is a topological domain, cytoplasmic.

Belongs to the FMO family. FAD serves as cofactor. Expressed mainly in fetal and adult liver.

Its subcellular location is the endoplasmic reticulum membrane. It catalyses the reaction hypotaurine + NADPH + O2 + H(+) = taurine + NADP(+) + H2O. The enzyme catalyses hypotaurine + NADH + O2 + H(+) = taurine + NAD(+) + H2O. The catalysed reaction is trimethylamine + NADPH + O2 = trimethylamine N-oxide + NADP(+) + H2O. It carries out the reaction N,N-dimethylaniline + NADPH + O2 + H(+) = N,N-dimethylaniline N-oxide + NADP(+) + H2O. In terms of biological role, broad spectrum monooxygenase that catalyzes the oxygenation of a wide variety of nitrogen- and sulfur-containing compounds including xenobiotics. Catalyzes the S-oxygenation of hypotaurine to produce taurine, an organic osmolyte involved in cell volume regulation as well as a variety of cytoprotective and developmental processes. In vitro, catalyzes the N-oxygenation of trimethylamine (TMA) to produce trimethylamine N-oxide (TMAO) and could therefore participate to the detoxification of this compound that is generated by the action of gut microbiota from dietary precursors such as choline, choline containing compounds, betaine or L-carnitine. The protein is Flavin-containing monooxygenase 1 of Homo sapiens (Human).